Reading from the N-terminus, the 273-residue chain is MNNRVHQGHLARKRFGQNFLNDQFVIDSIVSAINPQKGQAMVEIGPGLAALTEPVGERLDQLTVIELDRDLAARLQTHPFLGPKLTIYQQDAMTMNFGELAEKMGQPLRVFGNLPYNISTPLMFHLFSYTDAIADMHFMLQKEVVNRLVAGPNSKAYGRLSVMAQYYCQVIPVLEVPPSAFTPPPKVDSAVVRLVPHSTMPYPVKEIRVLSRITTEAFNQRRKTIRNSLGNLFSVEVLTELGIDPAMRAENISVAQYCLMANWLSDNLPTKES.

S-adenosyl-L-methionine is bound by residues asparagine 18, leucine 20, glycine 45, glutamate 66, aspartate 91, and asparagine 113.

Belongs to the class I-like SAM-binding methyltransferase superfamily. rRNA adenine N(6)-methyltransferase family. RsmA subfamily.

It localises to the cytoplasm. It carries out the reaction adenosine(1518)/adenosine(1519) in 16S rRNA + 4 S-adenosyl-L-methionine = N(6)-dimethyladenosine(1518)/N(6)-dimethyladenosine(1519) in 16S rRNA + 4 S-adenosyl-L-homocysteine + 4 H(+). Its function is as follows. Specifically dimethylates two adjacent adenosines (A1518 and A1519) in the loop of a conserved hairpin near the 3'-end of 16S rRNA in the 30S particle. May play a critical role in biogenesis of 30S subunits. This is Ribosomal RNA small subunit methyltransferase A from Klebsiella pneumoniae subsp. pneumoniae (strain ATCC 700721 / MGH 78578).